We begin with the raw amino-acid sequence, 352 residues long: tRNA-specific 2-thiouridylase MnmA (352 aa).

ATP contacts are provided by residues 6–13 and leucine 32; that span reads AMSGGVDS. Catalysis depends on cysteine 101, which acts as the Nucleophile. Cysteines 101 and 194 form a disulfide. ATP is bound at residue glycine 125. The interval 144–146 is interaction with tRNA; that stretch reads KDQ. Cysteine 194 functions as the Cysteine persulfide intermediate in the catalytic mechanism.

The protein belongs to the MnmA/TRMU family.

It localises to the cytoplasm. The catalysed reaction is S-sulfanyl-L-cysteinyl-[protein] + uridine(34) in tRNA + AH2 + ATP = 2-thiouridine(34) in tRNA + L-cysteinyl-[protein] + A + AMP + diphosphate + H(+). Its function is as follows. Catalyzes the 2-thiolation of uridine at the wobble position (U34) of tRNA, leading to the formation of s(2)U34. The protein is tRNA-specific 2-thiouridylase MnmA of Frankia alni (strain DSM 45986 / CECT 9034 / ACN14a).